The following is a 389-amino-acid chain: MFNPAILVLADGSTFYGKSIGYQAVSAYSIGEVVFNTAMTGYQEILTDPSYAKQIVTLTYPHIGNTGTNDEDNESNQIYASGLIIRDLPLLHSNFRATSSLSDYLIQHNIIAIADIDTRRLTRILRETGSQAGCIYIPNENESLAQAVEKAQDLAKSFGSMAGKDLAKEVTCQHRYEWQEGIWHLPTNNAGKPFNLQTTPTFHVVAYDFGIKQNILRMLAERGCKITVVPAQTSAEDILALNPDGIFLSNGPGDPEPCTYAIQSIRQLLNTQKPIFGICLGHQLLGLAVGAKTRKMAFGHHGANHPVQDLKTEHVLITSQNHGFEIDEYSLPENVIVTHRSLFDNSVQGIELTNQVAFSFQGHPEANPGPQDVAYLFDKFINAVQATKA.

The segment at 1–199 is CPSase; that stretch reads MFNPAILVLA…AGKPFNLQTT (199 aa). Positions 50, 251, and 253 each coordinate L-glutamine. One can recognise a Glutamine amidotransferase type-1 domain in the interval 203-389; the sequence is HVVAYDFGIK…FINAVQATKA (187 aa). Cys279 acts as the Nucleophile in catalysis. L-glutamine is bound by residues Leu280, Gln283, Asn321, Gly323, and Phe324. Residues His363 and Glu365 contribute to the active site.

This sequence belongs to the CarA family. In terms of assembly, composed of two chains; the small (or glutamine) chain promotes the hydrolysis of glutamine to ammonia, which is used by the large (or ammonia) chain to synthesize carbamoyl phosphate. Tetramer of heterodimers (alpha,beta)4.

It catalyses the reaction hydrogencarbonate + L-glutamine + 2 ATP + H2O = carbamoyl phosphate + L-glutamate + 2 ADP + phosphate + 2 H(+). It carries out the reaction L-glutamine + H2O = L-glutamate + NH4(+). The protein operates within amino-acid biosynthesis; L-arginine biosynthesis; carbamoyl phosphate from bicarbonate: step 1/1. It functions in the pathway pyrimidine metabolism; UMP biosynthesis via de novo pathway; (S)-dihydroorotate from bicarbonate: step 1/3. Functionally, small subunit of the glutamine-dependent carbamoyl phosphate synthetase (CPSase). CPSase catalyzes the formation of carbamoyl phosphate from the ammonia moiety of glutamine, carbonate, and phosphate donated by ATP, constituting the first step of 2 biosynthetic pathways, one leading to arginine and/or urea and the other to pyrimidine nucleotides. The small subunit (glutamine amidotransferase) binds and cleaves glutamine to supply the large subunit with the substrate ammonia. This is Carbamoyl phosphate synthase small chain from Haemophilus ducreyi (strain 35000HP / ATCC 700724).